Here is a 950-residue protein sequence, read N- to C-terminus: Coatomer subunit beta-2 (950 aa).

HEAT repeat units lie at residues 92–126, 127–164, 275–312, 313–350, and 392–429; these read PEMI…LSEP, EVLE…LPHG, TAVR…TSHR, DVMV…ARNV, and EVAG…TNPK.

As to quaternary structure, oligomeric complex that consists of at least the alpha, beta, beta', gamma, delta, epsilon and zeta subunits.

The protein localises to the cytoplasm. Its subcellular location is the golgi apparatus membrane. The protein resides in the cytoplasmic vesicle. It is found in the COPI-coated vesicle membrane. Functionally, the coatomer is a cytosolic protein complex that binds to dilysine motifs and reversibly associates with Golgi non-clathrin-coated vesicles, which further mediate biosynthetic protein transport from the ER, via the Golgi up to the trans Golgi network. Coatomer complex is required for budding from Golgi membranes, and is essential for the retrograde Golgi-to-ER transport of dilysine-tagged proteins. This chain is Coatomer subunit beta-2, found in Oryza sativa subsp. japonica (Rice).